A 773-amino-acid polypeptide reads, in one-letter code: Membrane-bound aldehyde dehydrogenase [pyrroloquinoline-quinone] (773 aa).

Positions 1 to 44 (MGRLNRFRLGKDGRREQASLSRRGFLVTSLGAGVMFGFARPSSA) form a signal peptide, tat-type signal.

It depends on pyrroloquinoline quinone as a cofactor. In terms of processing, predicted to be exported by the Tat system. The position of the signal peptide cleavage has been experimentally proven.

The protein resides in the cell inner membrane. It carries out the reaction an aldehyde + a quinone + H2O = a quinol + a carboxylate + H(+). In Gluconacetobacter polyoxogenes (Acetobacter polyoxogenes), this protein is Membrane-bound aldehyde dehydrogenase [pyrroloquinoline-quinone].